A 403-amino-acid chain; its full sequence is Probable tRNA sulfurtransferase (403 aa).

One can recognise a THUMP domain in the interval 60–165; it reads QLVEERLKPI…KEGVFLSCRT (106 aa). ATP contacts are provided by residues 183–184, 208–209, Arg-265, Gly-287, and Gln-296; these read ML and HF.

Belongs to the ThiI family.

The protein resides in the cytoplasm. It catalyses the reaction [ThiI sulfur-carrier protein]-S-sulfanyl-L-cysteine + a uridine in tRNA + 2 reduced [2Fe-2S]-[ferredoxin] + ATP + H(+) = [ThiI sulfur-carrier protein]-L-cysteine + a 4-thiouridine in tRNA + 2 oxidized [2Fe-2S]-[ferredoxin] + AMP + diphosphate. The catalysed reaction is [ThiS sulfur-carrier protein]-C-terminal Gly-Gly-AMP + S-sulfanyl-L-cysteinyl-[cysteine desulfurase] + AH2 = [ThiS sulfur-carrier protein]-C-terminal-Gly-aminoethanethioate + L-cysteinyl-[cysteine desulfurase] + A + AMP + 2 H(+). It participates in cofactor biosynthesis; thiamine diphosphate biosynthesis. Catalyzes the ATP-dependent transfer of a sulfur to tRNA to produce 4-thiouridine in position 8 of tRNAs, which functions as a near-UV photosensor. Also catalyzes the transfer of sulfur to the sulfur carrier protein ThiS, forming ThiS-thiocarboxylate. This is a step in the synthesis of thiazole, in the thiamine biosynthesis pathway. The sulfur is donated as persulfide by IscS. This chain is Probable tRNA sulfurtransferase, found in Listeria monocytogenes serotype 4b (strain CLIP80459).